The chain runs to 429 residues: Serine hydroxymethyltransferase (429 aa).

Residues Leu-126 and 130–132 each bind (6S)-5,6,7,8-tetrahydrofolate; that span reads GHL. Lys-235 is subject to N6-(pyridoxal phosphate)lysine. (6S)-5,6,7,8-tetrahydrofolate is bound at residue 359-361; that stretch reads SPF.

This sequence belongs to the SHMT family. In terms of assembly, homodimer. Requires pyridoxal 5'-phosphate as cofactor.

It is found in the cytoplasm. It catalyses the reaction (6R)-5,10-methylene-5,6,7,8-tetrahydrofolate + glycine + H2O = (6S)-5,6,7,8-tetrahydrofolate + L-serine. It participates in one-carbon metabolism; tetrahydrofolate interconversion. The protein operates within amino-acid biosynthesis; glycine biosynthesis; glycine from L-serine: step 1/1. Its function is as follows. Catalyzes the reversible interconversion of serine and glycine with tetrahydrofolate (THF) serving as the one-carbon carrier. This reaction serves as the major source of one-carbon groups required for the biosynthesis of purines, thymidylate, methionine, and other important biomolecules. Also exhibits THF-independent aldolase activity toward beta-hydroxyamino acids, producing glycine and aldehydes, via a retro-aldol mechanism. This Synechococcus sp. (strain CC9902) protein is Serine hydroxymethyltransferase.